A 582-amino-acid chain; its full sequence is Membrane protein insertase YidC (582 aa).

A run of 4 helical transmembrane segments spans residues 4–24 (NTVL…YIQQ), 376–396 (IIPN…IIFF), 446–466 (ASGC…FGLF), and 542–562 (FMPL…LLFW).

This sequence belongs to the OXA1/ALB3/YidC family. Type 1 subfamily. As to quaternary structure, interacts with the Sec translocase complex via SecD. Specifically interacts with transmembrane segments of nascent integral membrane proteins during membrane integration.

It is found in the cell inner membrane. Functionally, required for the insertion and/or proper folding and/or complex formation of integral membrane proteins into the membrane. Involved in integration of membrane proteins that insert both dependently and independently of the Sec translocase complex, as well as at least some lipoproteins. Aids folding of multispanning membrane proteins. This Treponema denticola (strain ATCC 35405 / DSM 14222 / CIP 103919 / JCM 8153 / KCTC 15104) protein is Membrane protein insertase YidC.